The chain runs to 293 residues: Ribonuclease HIII (293 aa).

Positions L78–R293 constitute an RNase H type-2 domain. Residues D84, E85, and D187 each contribute to the a divalent metal cation site.

This sequence belongs to the RNase HII family. RnhC subfamily. Requires Mn(2+) as cofactor. Mg(2+) serves as cofactor.

It localises to the cytoplasm. It carries out the reaction Endonucleolytic cleavage to 5'-phosphomonoester.. Functionally, endonuclease that specifically degrades the RNA of RNA-DNA hybrids. The polypeptide is Ribonuclease HIII (Streptococcus pneumoniae (strain JJA)).